Here is a 412-residue protein sequence, read N- to C-terminus: Gamma-glutamyl phosphate reductase (412 aa).

This sequence belongs to the gamma-glutamyl phosphate reductase family.

The protein resides in the cytoplasm. It carries out the reaction L-glutamate 5-semialdehyde + phosphate + NADP(+) = L-glutamyl 5-phosphate + NADPH + H(+). It functions in the pathway amino-acid biosynthesis; L-proline biosynthesis; L-glutamate 5-semialdehyde from L-glutamate: step 2/2. Functionally, catalyzes the NADPH-dependent reduction of L-glutamate 5-phosphate into L-glutamate 5-semialdehyde and phosphate. The product spontaneously undergoes cyclization to form 1-pyrroline-5-carboxylate. The sequence is that of Gamma-glutamyl phosphate reductase from Aliarcobacter butzleri (strain RM4018) (Arcobacter butzleri).